A 120-amino-acid polypeptide reads, in one-letter code: Aspartate 1-decarboxylase (120 aa).

Serine 25 serves as the catalytic Schiff-base intermediate with substrate; via pyruvic acid. The residue at position 25 (serine 25) is a Pyruvic acid (Ser). Threonine 57 provides a ligand contact to substrate. Tyrosine 58 functions as the Proton donor in the catalytic mechanism. 73–75 is a binding site for substrate; sequence GAA.

It belongs to the PanD family. As to quaternary structure, heterooctamer of four alpha and four beta subunits. Requires pyruvate as cofactor. In terms of processing, is synthesized initially as an inactive proenzyme, which is activated by self-cleavage at a specific serine bond to produce a beta-subunit with a hydroxyl group at its C-terminus and an alpha-subunit with a pyruvoyl group at its N-terminus.

It localises to the cytoplasm. It catalyses the reaction L-aspartate + H(+) = beta-alanine + CO2. The protein operates within cofactor biosynthesis; (R)-pantothenate biosynthesis; beta-alanine from L-aspartate: step 1/1. Functionally, catalyzes the pyruvoyl-dependent decarboxylation of aspartate to produce beta-alanine. The protein is Aspartate 1-decarboxylase of Ralstonia nicotianae (strain ATCC BAA-1114 / GMI1000) (Ralstonia solanacearum).